The following is a 118-amino-acid chain: Ferredoxin-thioredoxin reductase, catalytic chain (118 aa).

C56 provides a ligand contact to [4Fe-4S] cluster. C58 functions as the Nucleophile in the catalytic mechanism. Residues C58 and C88 are joined by a disulfide bond. Positions 75, 77, and 86 each coordinate [4Fe-4S] cluster.

It belongs to the ferredoxin thioredoxin reductase beta subunit family. As to quaternary structure, heterodimer of subunit A (variable subunit) and subunit B (catalytic subunit). Heterodimeric FTR forms a complex with ferredoxin and thioredoxin. The cofactor is [4Fe-4S] cluster.

The enzyme catalyses [thioredoxin]-disulfide + 2 reduced [2Fe-2S]-[ferredoxin] + 2 H(+) = [thioredoxin]-dithiol + 2 oxidized [2Fe-2S]-[ferredoxin]. Its function is as follows. Catalytic subunit of the ferredoxin-thioredoxin reductase (FTR), which catalyzes the two-electron reduction of thioredoxins by the electrons provided by reduced ferredoxin. This Synechocystis sp. (strain ATCC 27184 / PCC 6803 / Kazusa) protein is Ferredoxin-thioredoxin reductase, catalytic chain.